The sequence spans 99 residues: uncharacterized protein (99 aa).

Residues 6-26 (LVCSIVFILFILFYDLKIGTI) form a helical membrane-spanning segment. A LysM domain is found at 48–95 (KTVKVKPGDTVMSIVGSAGSPDDIVKDFEALNPNVKANAIQAGTAYKF).

Its subcellular location is the secreted. It is found in the cell wall. The protein localises to the membrane. This is an uncharacterized protein from Bacillus subtilis (strain 168).